The chain runs to 823 residues: Apoptosis-resistant E3 ubiquitin protein ligase 1 (823 aa).

A Filamin repeat occupies tryptophan 64 to phenylalanine 158. Positions proline 315–glutamate 345 are disordered. The interval serine 483 to threonine 789 is interaction with SOCS2. The region spanning serine 483–leucine 823 is the HECT domain. Cysteine 790 functions as the Glycyl thioester intermediate in the catalytic mechanism.

As to quaternary structure, interacts with SOCS2. Interacts (via HECT domain) with HTRA2, DIABLO/SMAC and SEPTIN4; in the cytoplasm following induction of apoptosis. Post-translationally, autoubiquitinated in vitro in the presence of E2 enzyme UBE2D1/UBCH5A. As to expression, detected in brain, testis, heart, liver, lung and kidney with very low levels in skeletal muscle and spleen.

The catalysed reaction is S-ubiquitinyl-[E2 ubiquitin-conjugating enzyme]-L-cysteine + [acceptor protein]-L-lysine = [E2 ubiquitin-conjugating enzyme]-L-cysteine + N(6)-ubiquitinyl-[acceptor protein]-L-lysine.. It participates in protein modification; protein ubiquitination. Functionally, E3 ubiquitin-protein ligase that catalyzes 'Lys-11'- or 'Lys-33'-linked polyubiquitin chains, with some preference for 'Lys-33' linkages. E3 ubiquitin-protein ligases accept ubiquitin from an E2 ubiquitin-conjugating enzyme in the form of a thioester and then directly transfers the ubiquitin to targeted substrates. Ubiquitinates SEPTIN4, DIABLO/SMAC and HTRA2 in vitro. Modulates pulmonary inflammation by targeting SOCS2 for ubiquitination and subsequent degradation by the proteasome. In Mus musculus (Mouse), this protein is Apoptosis-resistant E3 ubiquitin protein ligase 1 (Arel1).